Here is a 390-residue protein sequence, read N- to C-terminus: GTPase Obg (390 aa).

Residues 1–159 (MKFVDEASIL…RELLLELMLL (159 aa)) form the Obg domain. Residues 127-147 (NTRFKSSVNRTPRQKTNGTPG) are disordered. The span at 129–145 (RFKSSVNRTPRQKTNGT) shows a compositional bias: polar residues. The OBG-type G domain occupies 160 to 333 (ADVGMLGMPN…LCWDVMTFII (174 aa)). Residues 166-173 (GMPNAGKS), 191-195 (FTTLV), 213-216 (DIPG), 283-286 (NKID), and 314-316 (SAA) contribute to the GTP site. Positions 173 and 193 each coordinate Mg(2+).

This sequence belongs to the TRAFAC class OBG-HflX-like GTPase superfamily. OBG GTPase family. As to quaternary structure, monomer. Requires Mg(2+) as cofactor.

Its subcellular location is the cytoplasm. Functionally, an essential GTPase which binds GTP, GDP and possibly (p)ppGpp with moderate affinity, with high nucleotide exchange rates and a fairly low GTP hydrolysis rate. Plays a role in control of the cell cycle, stress response, ribosome biogenesis and in those bacteria that undergo differentiation, in morphogenesis control. The protein is GTPase Obg of Escherichia coli O7:K1 (strain IAI39 / ExPEC).